A 269-amino-acid chain; its full sequence is Sushi domain-containing protein 3 (269 aa).

The disordered stretch occupies residues 1–23; that stretch reads MRRTSATLRGRARPRWRAGNTTP. Topologically, residues 1-103 are extracellular; it reads MRRTSATLRG…VPPHETFGFK (103 aa). The region spanning 30–93 is the Sushi domain; the sequence is GTCAQLHPPP…WSSGSPVCKA (64 aa). 2 cysteine pairs are disulfide-bonded: C32/C75 and C61/C91. A helical transmembrane segment spans residues 104–124; the sequence is VAVIASIVSCAIILLMSMAFL. Residues 125 to 269 lie on the Cytoplasmic side of the membrane; that stretch reads TCCLLKCVQK…PGRPKVYLPG (145 aa). A disordered region spans residues 171–237; that stretch reads NNSSSVGGGN…RMGTPGPGGC (67 aa). The span at 176–190 shows a compositional bias: gly residues; sequence VGGGNGGPSGGGGKP.

It is found in the cell membrane. In Mus musculus (Mouse), this protein is Sushi domain-containing protein 3 (Susd3).